We begin with the raw amino-acid sequence, 492 residues long: 3-octaprenyl-4-hydroxybenzoate carboxy-lyase (492 aa).

Mn(2+) is bound at residue N177. Prenylated FMN-binding positions include 180 to 182 (IYR), 194 to 196 (RWL), and 199 to 200 (RG). Residue E243 participates in Mn(2+) binding. D292 functions as the Proton donor in the catalytic mechanism.

Belongs to the UbiD family. In terms of assembly, homohexamer. Prenylated FMN is required as a cofactor. It depends on Mn(2+) as a cofactor.

Its subcellular location is the cell membrane. It catalyses the reaction a 4-hydroxy-3-(all-trans-polyprenyl)benzoate + H(+) = a 2-(all-trans-polyprenyl)phenol + CO2. It functions in the pathway cofactor biosynthesis; ubiquinone biosynthesis. Catalyzes the decarboxylation of 3-octaprenyl-4-hydroxy benzoate to 2-octaprenylphenol, an intermediate step in ubiquinone biosynthesis. The polypeptide is 3-octaprenyl-4-hydroxybenzoate carboxy-lyase (Neisseria gonorrhoeae (strain ATCC 700825 / FA 1090)).